A 388-amino-acid chain; its full sequence is Protein DVU_0534 (388 aa).

Transmembrane regions (helical) follow at residues 10–31 (LMTP…LTVL), 57–78 (LLCG…YLFG), 89–106 (AITT…ALNY), 130–144 (EVGL…VLFV), 166–191 (LTLV…LFLI), 199–222 (LWYS…SMVI), 254–265 (AASFVLAGYFMI), 291–306 (MLGF…ALGV), 316–328 (FASV…IVMN), and 354–368 (IGIS…ITVY).

Belongs to the NrfD family.

Its subcellular location is the cell membrane. In terms of biological role, HMWC (high-molecular-weight cytochrome c), ORF2, ORF3, ORF4, ORF5 and ORF6 in the HMC operon form a transmembrane protein complex that allows electron flow from the periplasmic hydrogenase to the cytoplasmic enzymes that catalyze reduction of sulfates. The sequence is that of Protein DVU_0534 from Nitratidesulfovibrio vulgaris (strain ATCC 29579 / DSM 644 / CCUG 34227 / NCIMB 8303 / VKM B-1760 / Hildenborough) (Desulfovibrio vulgaris).